Reading from the N-terminus, the 309-residue chain is Ribosomal RNA small subunit methyltransferase H (309 aa).

S-adenosyl-L-methionine-binding positions include Gly-33 to His-35, Asp-53, Phe-79, Asp-100, and Gln-107.

The protein belongs to the methyltransferase superfamily. RsmH family.

The protein resides in the cytoplasm. It carries out the reaction cytidine(1402) in 16S rRNA + S-adenosyl-L-methionine = N(4)-methylcytidine(1402) in 16S rRNA + S-adenosyl-L-homocysteine + H(+). Its function is as follows. Specifically methylates the N4 position of cytidine in position 1402 (C1402) of 16S rRNA. This Clostridium botulinum (strain 657 / Type Ba4) protein is Ribosomal RNA small subunit methyltransferase H.